A 689-amino-acid polypeptide reads, in one-letter code: DNA ligase (689 aa).

Residues 35 to 39, 84 to 85, and E122 each bind NAD(+); these read DEVYD and SL. The active-site N6-AMP-lysine intermediate is K124. Positions 145, 182, 308, and 332 each coordinate NAD(+). Residues C426, C429, C444, and C449 each coordinate Zn(2+). Residues 612–689 form the BRCT domain; it reads TTEKSLNGKR…NETELIQMCR (78 aa).

The protein belongs to the NAD-dependent DNA ligase family. LigA subfamily. Mg(2+) is required as a cofactor. It depends on Mn(2+) as a cofactor.

The catalysed reaction is NAD(+) + (deoxyribonucleotide)n-3'-hydroxyl + 5'-phospho-(deoxyribonucleotide)m = (deoxyribonucleotide)n+m + AMP + beta-nicotinamide D-nucleotide.. Its function is as follows. DNA ligase that catalyzes the formation of phosphodiester linkages between 5'-phosphoryl and 3'-hydroxyl groups in double-stranded DNA using NAD as a coenzyme and as the energy source for the reaction. It is essential for DNA replication and repair of damaged DNA. In Thermosynechococcus vestitus (strain NIES-2133 / IAM M-273 / BP-1), this protein is DNA ligase.